Consider the following 252-residue polypeptide: tRNA pseudouridine synthase A (252 aa).

Asp54 serves as the catalytic Nucleophile. Tyr112 contributes to the substrate binding site.

Belongs to the tRNA pseudouridine synthase TruA family. Homodimer.

The enzyme catalyses uridine(38/39/40) in tRNA = pseudouridine(38/39/40) in tRNA. In terms of biological role, formation of pseudouridine at positions 38, 39 and 40 in the anticodon stem and loop of transfer RNAs. The sequence is that of tRNA pseudouridine synthase A from Oenococcus oeni (strain ATCC BAA-331 / PSU-1).